The sequence spans 283 residues: NAD kinase (283 aa).

Aspartate 61 acts as the Proton acceptor in catalysis. NAD(+) is bound by residues 61–62 (DG), 134–135 (ND), arginine 145, aspartate 164, 175–180 (TAYNLS), and glutamine 234.

Belongs to the NAD kinase family. Requires a divalent metal cation as cofactor.

Its subcellular location is the cytoplasm. It carries out the reaction NAD(+) + ATP = ADP + NADP(+) + H(+). Its function is as follows. Involved in the regulation of the intracellular balance of NAD and NADP, and is a key enzyme in the biosynthesis of NADP. Catalyzes specifically the phosphorylation on 2'-hydroxyl of the adenosine moiety of NAD to yield NADP. In Clostridium kluyveri (strain NBRC 12016), this protein is NAD kinase.